We begin with the raw amino-acid sequence, 161 residues long: uncharacterized protein (161 aa).

The N-terminal stretch at Met-1–Ala-27 is a signal peptide.

The protein localises to the secreted. This is an uncharacterized protein from Bacillus subtilis (strain 168).